A 131-amino-acid chain; its full sequence is Small ribosomal subunit protein bS6 (131 aa).

Residues 98 to 131 (EASPMVKAKDERRERRDDFANETADDAEAGDSEE) are disordered. A compositionally biased stretch (basic and acidic residues) spans 104–116 (KAKDERRERRDDF). The segment covering 120-131 (TADDAEAGDSEE) has biased composition (acidic residues).

It belongs to the bacterial ribosomal protein bS6 family.

Binds together with bS18 to 16S ribosomal RNA. The protein is Small ribosomal subunit protein bS6 of Salmonella dublin (strain CT_02021853).